We begin with the raw amino-acid sequence, 88 residues long: Phosphocarrier protein HPr (88 aa).

Residues 1-88 (MEQASFVVID…EVLKKEGLAE (88 aa)) enclose the HPr domain. The Pros-phosphohistidine intermediate role is filled by H15. S46 is modified (phosphoserine; by HPrK/P).

The protein belongs to the HPr family.

It localises to the cytoplasm. Phosphorylation on Ser-46 inhibits the phosphoryl transfer from enzyme I to HPr. In terms of biological role, general (non sugar-specific) component of the phosphoenolpyruvate-dependent sugar phosphotransferase system (sugar PTS). This major carbohydrate active-transport system catalyzes the phosphorylation of incoming sugar substrates concomitantly with their translocation across the cell membrane. The phosphoryl group from phosphoenolpyruvate (PEP) is transferred to the phosphoryl carrier protein HPr by enzyme I. Phospho-HPr then transfers it to the PTS EIIA domain. Its function is as follows. P-Ser-HPr interacts with the catabolite control protein A (CcpA), forming a complex that binds to DNA at the catabolite response elements cre, operator sites preceding a large number of catabolite-regulated genes. Thus, P-Ser-HPr is a corepressor in carbon catabolite repression (CCR), a mechanism that allows bacteria to coordinate and optimize the utilization of available carbon sources. P-Ser-HPr also plays a role in inducer exclusion, in which it probably interacts with several non-PTS permeases and inhibits their transport activity. The sequence is that of Phosphocarrier protein HPr (ptsH) from Listeria monocytogenes serovar 1/2a (strain ATCC BAA-679 / EGD-e).